The chain runs to 488 residues: Glutamyl-tRNA(Gln) amidotransferase subunit A (488 aa).

Active-site charge relay system residues include K77 and S152. The Acyl-ester intermediate role is filled by S176.

It belongs to the amidase family. GatA subfamily. Heterotrimer of A, B and C subunits.

It catalyses the reaction L-glutamyl-tRNA(Gln) + L-glutamine + ATP + H2O = L-glutaminyl-tRNA(Gln) + L-glutamate + ADP + phosphate + H(+). Allows the formation of correctly charged Gln-tRNA(Gln) through the transamidation of misacylated Glu-tRNA(Gln) in organisms which lack glutaminyl-tRNA synthetase. The reaction takes place in the presence of glutamine and ATP through an activated gamma-phospho-Glu-tRNA(Gln). This chain is Glutamyl-tRNA(Gln) amidotransferase subunit A, found in Streptococcus pneumoniae (strain JJA).